A 450-amino-acid chain; its full sequence is Succinate-semialdehyde dehydrogenase (450 aa).

119-120 (WN) is an NADP(+) binding site. Arginine 128 contacts substrate. Residues 143–146 (KPAK) and 197–198 (GS) each bind NADP(+). Glutamate 219 functions as the Proton acceptor in the catalytic mechanism. Leucine 220 provides a ligand contact to NADP(+). Residues arginine 247 and cysteine 253 each contribute to the substrate site. Cysteine 253 functions as the Nucleophile in the catalytic mechanism. Glutamate 350 contacts NADP(+). Serine 410 provides a ligand contact to substrate.

Belongs to the aldehyde dehydrogenase family. Homodimer.

It carries out the reaction succinate semialdehyde + NAD(+) + H2O = succinate + NADH + 2 H(+). The enzyme catalyses succinate semialdehyde + NADP(+) + H2O = succinate + NADPH + 2 H(+). Its pathway is alkaloid degradation; nicotine degradation. Catalyzes the NAD(P)(+)-dependent oxidation of succinate semialdehyde to succinate, which may enter the citric acid cycle. Is involved in the catabolism of 4-methylaminobutanoate produced from nicotine. Acts preferentially with NADP(+) as cosubstrate but can also use NAD(+). To a lesser extent, is active also towards butyraldehyde (8.5% of the activity observed with succinate semialdehyde) and propionaldehyde (1.6% of the activity observed with succinate semialdehyde) as substrates. This Paenarthrobacter nicotinovorans (Arthrobacter nicotinovorans) protein is Succinate-semialdehyde dehydrogenase (sad).